A 173-amino-acid polypeptide reads, in one-letter code: Small ribosomal subunit protein uS5 (173 aa).

Residues 17 to 80 (LREKMIAVNR…EEARRNMVKV (64 aa)) enclose the S5 DRBM domain.

Belongs to the universal ribosomal protein uS5 family. Part of the 30S ribosomal subunit. Contacts proteins S4 and S8.

Its function is as follows. With S4 and S12 plays an important role in translational accuracy. Functionally, located at the back of the 30S subunit body where it stabilizes the conformation of the head with respect to the body. The polypeptide is Small ribosomal subunit protein uS5 (Acidovorax sp. (strain JS42)).